The primary structure comprises 737 residues: Zinc finger protein 184 (737 aa).

Residues 28-99 form the KRAB domain; it reads VTFKDVVVNF…DSCIPVGPLE (72 aa). Ser-117 carries the phosphoserine modification. Lys-185 participates in a covalent cross-link: Glycyl lysine isopeptide (Lys-Gly) (interchain with G-Cter in SUMO2). C2H2-type zinc fingers lie at residues 201 to 223, 229 to 251, 257 to 279, 285 to 307, 313 to 335, 341 to 363, 369 to 391, 397 to 419, 425 to 447, 453 to 475, 481 to 503, 509 to 531, 537 to 559, 565 to 587, 593 to 615, 621 to 643, and 649 to 671; these read CKCNECGKAFTYCSALIRHQRTH, YKCNECNKAFSRSENLINHQRIH, YKCDQCGKGFIEGPSLTQHQRIH, YKCDECGKAFSQRTHLVQHQRIH, YTCTECGKSFSQRGHFMEHQKIH, FKCEECEKTFTRSTHLTQHQKIH, YKCNECGKAFNGPSTFIRHHMIH, YECNECGKAFSQHSNLTQHQKTH, YDCAECGKAFSYWSSLAQHLKIH, YKCSDCGKAFSYCSSLTQHRRIH, FECSECGKAFSYLSNLNQHQKTH, YECKECGKAFIRSSSLAKHERIH, YQCHECGKTFSYGSSLIQHKKIH, YKCNECGRAFNQKIHLTQHKRIH, YACPKCGKTFRHCSSLAQHQKTH, YQCNKCEKTFSQNSRLTQHQRIH, and YKCSECDKCFTGSVHLTEHRSTH. The C2H2-type 18; degenerate zinc finger occupies 677-698; that stretch reads YNSECPQTFSQSTYLTQHQKIH. The segment at 704-726 adopts a C2H2-type 19 zinc-finger fold; it reads LGCEDCEKAFQCHSALTKHQRLH.

This sequence belongs to the krueppel C2H2-type zinc-finger protein family.

It is found in the nucleus. In terms of biological role, may be involved in transcriptional regulation. The polypeptide is Zinc finger protein 184 (Zfp184) (Mus musculus (Mouse)).